A 290-amino-acid polypeptide reads, in one-letter code: N-acetylmannosamine kinase (290 aa).

Residues 6 to 13 (ALDIGGTK) and 132 to 139 (GVGGGIIL) contribute to the ATP site. 4 residues coordinate Zn(2+): His156, Cys166, Cys168, and Cys173.

It belongs to the ROK (NagC/XylR) family. NanK subfamily. Homodimer.

The enzyme catalyses an N-acyl-D-mannosamine + ATP = an N-acyl-D-mannosamine 6-phosphate + ADP + H(+). It functions in the pathway amino-sugar metabolism; N-acetylneuraminate degradation; D-fructose 6-phosphate from N-acetylneuraminate: step 2/5. In terms of biological role, catalyzes the phosphorylation of N-acetylmannosamine (ManNAc) to ManNAc-6-P. This chain is N-acetylmannosamine kinase, found in Yersinia pestis (strain Pestoides F).